Here is a 415-residue protein sequence, read N- to C-terminus: Probable G-protein coupled receptor 19 (415 aa).

The Extracellular portion of the chain corresponds to 1 to 69; it reads MVFAHRMDND…LNPGEVATAS (69 aa). 2 N-linked (GlcNAc...) asparagine glycosylation sites follow: asparagine 25 and asparagine 52. Residues 70–90 form a helical membrane-spanning segment; that stretch reads IFFGALWLFSIFGNSLVCLVI. Residues 91-102 are Cytoplasmic-facing; it reads HRSRRTQSTTNY. A helical membrane pass occupies residues 103 to 123; that stretch reads FVVSMACADLLISVASTPFVV. The Extracellular segment spans residues 124–152; that stretch reads LQFTTGRWTLGSAMCKVVRYFQYLTPGVQ. A disulfide bridge connects residues cysteine 138 and cysteine 210. Residues 153–173 traverse the membrane as a helical segment; it reads IYVLLSICIDRFYTIVYPLSF. Topologically, residues 174 to 182 are cytoplasmic; that stretch reads KVSREKAKK. The helical transmembrane segment at 183-203 threads the bilayer; that stretch reads MIAASWILDAAFVTPVFFFYG. Residues 204–221 are Extracellular-facing; that stretch reads SNWDSHCNYFLPPSWEGT. The chain crosses the membrane as a helical span at residues 222 to 242; the sequence is AYTVIHFLVGFVIPSILIILF. Residues 243–277 are Cytoplasmic-facing; that stretch reads YQKVIKYIWRIGTDGRTLRRTMNIVPRTKVKTVKM. The chain crosses the membrane as a helical span at residues 278 to 298; that stretch reads FLLLNLVFLFSWLPFHVAQLW. Over 299–309 the chain is Extracellular; the sequence is HPHEQDYKKSS. A helical transmembrane segment spans residues 310–332; the sequence is LVFTAVTWVSFSSSASKPTLYSI. Over 333 to 415 the chain is Cytoplasmic; that stretch reads YNANFRRGMK…INSNPPNTFV (83 aa).

The protein belongs to the G-protein coupled receptor 1 family. Strongly expressed in the brain.

It localises to the cell membrane. Functionally, G-protein coupled receptor that plays a role in the regulation of circadian rhythms and energy metabolism. Participates in maintaining proper circadian gene expression in the suprachiasmatic nucleus (SCN), the locus of the master circadian clock in the brain. May function as a coordinator of aging-associated metabolic dysfunction, stress response, DNA integrity management, and eventual senescence. Upon binding to adropin, modulates mitochondrial energy metabolism via the p44/42-PDK4 signaling pathway, influencing pyruvate dehydrogenase activity. The polypeptide is Probable G-protein coupled receptor 19 (Gpr19) (Mus musculus (Mouse)).